Consider the following 610-residue polypeptide: Butyryl-CoA dehydrogenase Swol_1933 (610 aa).

Catalysis depends on Glu451, which acts as the Proton acceptor.

This sequence belongs to the acyl-CoA dehydrogenase family. FAD is required as a cofactor.

Its subcellular location is the cytoplasm. It carries out the reaction butanoyl-CoA + oxidized [electron-transfer flavoprotein] + H(+) = (2E)-butenoyl-CoA + reduced [electron-transfer flavoprotein]. It catalyses the reaction a short-chain 2,3-saturated fatty acyl-CoA + oxidized [electron-transfer flavoprotein] + H(+) = a short-chain (2E)-enoyl-CoA + reduced [electron-transfer flavoprotein]. It functions in the pathway lipid metabolism; butanoate metabolism. Involved in syntrophic growth of S.wolfei with butyrate, as part of the butyrate oxidation pathway. Catalyzes the oxidation of butanoyl-CoA to crotonyl-CoA. Probably passes the electrons released by this reaction on to electron-transfer flavoproteins (EtfAB) to finally generate hydrogen and/or formate. In Syntrophomonas wolfei subsp. wolfei (strain DSM 2245B / Goettingen), this protein is Butyryl-CoA dehydrogenase Swol_1933.